A 513-amino-acid chain; its full sequence is 2-isopropylmalate synthase (513 aa).

Positions 5 to 268 constitute a Pyruvate carboxyltransferase domain; it reads LIIFDTTLRD…EVGIDTTQIV (264 aa). Mn(2+)-binding residues include Asp14, His202, His204, and Asn239. Residues 394-513 are regulatory domain; sequence RLLSLEQQSA…SKNERVAAQG (120 aa).

The protein belongs to the alpha-IPM synthase/homocitrate synthase family. LeuA type 1 subfamily. In terms of assembly, homodimer. It depends on Mn(2+) as a cofactor.

It localises to the cytoplasm. The enzyme catalyses 3-methyl-2-oxobutanoate + acetyl-CoA + H2O = (2S)-2-isopropylmalate + CoA + H(+). The protein operates within amino-acid biosynthesis; L-leucine biosynthesis; L-leucine from 3-methyl-2-oxobutanoate: step 1/4. Its function is as follows. Catalyzes the condensation of the acetyl group of acetyl-CoA with 3-methyl-2-oxobutanoate (2-ketoisovalerate) to form 3-carboxy-3-hydroxy-4-methylpentanoate (2-isopropylmalate). This Methylibium petroleiphilum (strain ATCC BAA-1232 / LMG 22953 / PM1) protein is 2-isopropylmalate synthase.